The chain runs to 289 residues: Paired box protein 5 homolog (289 aa).

A DNA-binding region (paired) is located at residues 29 to 155 (SHTGVNQLGG…SSINRIVRNK (127 aa)). Residues 32-88 (GVNQLGGVFVNGRPLADTVRAQIVEMSQHGTRPCDISRQLKVSHGCVSKILGRYYST) form a PAI subdomain region. The RED subdomain stretch occupies residues 107–155 (RVVECIAGYKRANPTMFAWEIRQKLIEDQICGEENVPSVSSINRIVRNK). 2 stretches are compositionally biased toward low complexity: residues 166–179 (SVTS…SATS) and 189–198 (VQQHMQQSTS). The interval 166–198 (SVTSSAARPSSATSHHQRSPPRGVQQHMQQSTS) is disordered.

The protein localises to the nucleus. Its subcellular location is the chromosome. Functionally, transcription factor. Binds to specific DNA sequence motifs in regulatory elements, for example in the genes encoding transcription factor lin-48, apoptosis regulator ced-9 and neuropeptide-like protein nlp-2. Specifies cell fate, playing an essential role in embryonic and larval development. Involved in morphogenesis of the vulva and uterus in hermaphrodites and of the rectal epithelium of the tail in males. Plays multiple roles in the development of the egg-laying system, acting in both lin-3/EGF-pathway-dependent and -independent processes. Positively regulates expression of neuropeptide-like proteins nlp-2 and nlp-7 in uvl cells in an EGF-pathway-dependent manner. Involved in negatively modulating apoptosis in germline and somatic cells, acting in partial redundancy with transcription factor pax-2, probably by directly regulating transcription of ced-9. Positively regulates transcription of lin-48 in hindgut cells and functions in the development of the hindgut. The sequence is that of Paired box protein 5 homolog from Caenorhabditis elegans.